A 126-amino-acid polypeptide reads, in one-letter code: Glycine cleavage system H protein (126 aa).

The 82-residue stretch at 23–104 folds into the Lipoyl-binding domain; that stretch reads TLTVGITDHA…PYESWLFKIK (82 aa). N6-lipoyllysine is present on lysine 64.

This sequence belongs to the GcvH family. In terms of assembly, the glycine cleavage system is composed of four proteins: P, T, L and H. The cofactor is (R)-lipoate.

Functionally, the glycine cleavage system catalyzes the degradation of glycine. The H protein shuttles the methylamine group of glycine from the P protein to the T protein. This Paraburkholderia phytofirmans (strain DSM 17436 / LMG 22146 / PsJN) (Burkholderia phytofirmans) protein is Glycine cleavage system H protein.